A 597-amino-acid chain; its full sequence is Elongation factor 4 (597 aa).

Positions 2–184 constitute a tr-type G domain; sequence DHIRNFSIIA…ALIAKVPPPK (183 aa). GTP contacts are provided by residues 14-19 and 131-134; these read DHGKST and NKID.

This sequence belongs to the TRAFAC class translation factor GTPase superfamily. Classic translation factor GTPase family. LepA subfamily.

It localises to the cell inner membrane. It catalyses the reaction GTP + H2O = GDP + phosphate + H(+). Required for accurate and efficient protein synthesis under certain stress conditions. May act as a fidelity factor of the translation reaction, by catalyzing a one-codon backward translocation of tRNAs on improperly translocated ribosomes. Back-translocation proceeds from a post-translocation (POST) complex to a pre-translocation (PRE) complex, thus giving elongation factor G a second chance to translocate the tRNAs correctly. Binds to ribosomes in a GTP-dependent manner. The sequence is that of Elongation factor 4 from Burkholderia vietnamiensis (strain G4 / LMG 22486) (Burkholderia cepacia (strain R1808)).